The chain runs to 132 residues: Large ribosomal subunit protein uL14 (132 aa).

Belongs to the universal ribosomal protein uL14 family. Part of the 50S ribosomal subunit. Forms a cluster with proteins L3 and L24e, part of which may contact the 16S rRNA in 2 intersubunit bridges.

Its function is as follows. Binds to 23S rRNA. Forms part of two intersubunit bridges in the 70S ribosome. The polypeptide is Large ribosomal subunit protein uL14 (Archaeoglobus fulgidus (strain ATCC 49558 / DSM 4304 / JCM 9628 / NBRC 100126 / VC-16)).